Here is a 269-residue protein sequence, read N- to C-terminus: Putative aga operon transcriptional repressor (269 aa).

The HTH deoR-type domain maps to threonine 15–isoleucine 70. Positions valine 32–aspartate 51 form a DNA-binding region, H-T-H motif.

In terms of biological role, probable repressor for the aga operon for N-acetyl galactosamine transport and metabolism. In Escherichia coli O157:H7, this protein is Putative aga operon transcriptional repressor (agaR).